We begin with the raw amino-acid sequence, 205 residues long: Small ribosomal subunit protein uS4 (205 aa).

The segment at Asn18–Ser46 is disordered. Residues Arg94 to Asn157 form the S4 RNA-binding domain.

Belongs to the universal ribosomal protein uS4 family. Part of the 30S ribosomal subunit. Contacts protein S5. The interaction surface between S4 and S5 is involved in control of translational fidelity.

In terms of biological role, one of the primary rRNA binding proteins, it binds directly to 16S rRNA where it nucleates assembly of the body of the 30S subunit. Its function is as follows. With S5 and S12 plays an important role in translational accuracy. The protein is Small ribosomal subunit protein uS4 of Rhodopseudomonas palustris (strain BisB18).